Reading from the N-terminus, the 438-residue chain is tRNA modification GTPase MnmE (438 aa).

(6S)-5-formyl-5,6,7,8-tetrahydrofolate contacts are provided by Arg-20, Glu-79, and Lys-119. Residues 215-360 enclose the TrmE-type G domain; the sequence is GVEVAIVGPP…LEAALAARVG (146 aa). GTP-binding positions include 225 to 230, 244 to 250, and 269 to 272; these read NAGKSS, SDEAGTT, and DTAG. 2 residues coordinate Mg(2+): Ser-229 and Thr-250. (6S)-5-formyl-5,6,7,8-tetrahydrofolate is bound at residue Lys-438.

It belongs to the TRAFAC class TrmE-Era-EngA-EngB-Septin-like GTPase superfamily. TrmE GTPase family. In terms of assembly, homodimer. Heterotetramer of two MnmE and two MnmG subunits. K(+) is required as a cofactor.

It localises to the cytoplasm. Its function is as follows. Exhibits a very high intrinsic GTPase hydrolysis rate. Involved in the addition of a carboxymethylaminomethyl (cmnm) group at the wobble position (U34) of certain tRNAs, forming tRNA-cmnm(5)s(2)U34. The sequence is that of tRNA modification GTPase MnmE from Parvibaculum lavamentivorans (strain DS-1 / DSM 13023 / NCIMB 13966).